We begin with the raw amino-acid sequence, 199 residues long: Prolactin (199 aa).

Cysteine 4 and cysteine 11 are joined by a disulfide. Serine 26, serine 34, and serine 90 each carry phosphoserine. Cystine bridges form between cysteine 58-cysteine 174 and cysteine 191-cysteine 199.

This sequence belongs to the somatotropin/prolactin family. As to quaternary structure, interacts with PRLR.

It localises to the secreted. Prolactin acts primarily on the mammary gland by promoting lactation. This Loxodonta africana (African elephant) protein is Prolactin (PRL).